Reading from the N-terminus, the 201-residue chain is Holliday junction branch migration complex subunit RuvA (201 aa).

A domain I region spans residues 1–64; sequence MIGRLYGKII…EDAHLLFGFA (64 aa). The segment at 65–143 is domain II; sequence QKQDRTLFRE…GIAQTDFFVE (79 aa). The flexible linker stretch occupies residues 144–154; it reads HSHETMVATYE. The interval 154 to 201 is domain III; sequence EIDASEEARDALLALGYKLTDAEKMIKKVHKSGATSEQLIRDALKASL.

This sequence belongs to the RuvA family. In terms of assembly, homotetramer. Forms an RuvA(8)-RuvB(12)-Holliday junction (HJ) complex. HJ DNA is sandwiched between 2 RuvA tetramers; dsDNA enters through RuvA and exits via RuvB. An RuvB hexamer assembles on each DNA strand where it exits the tetramer. Each RuvB hexamer is contacted by two RuvA subunits (via domain III) on 2 adjacent RuvB subunits; this complex drives branch migration. In the full resolvosome a probable DNA-RuvA(4)-RuvB(12)-RuvC(2) complex forms which resolves the HJ.

It localises to the cytoplasm. Its function is as follows. The RuvA-RuvB-RuvC complex processes Holliday junction (HJ) DNA during genetic recombination and DNA repair, while the RuvA-RuvB complex plays an important role in the rescue of blocked DNA replication forks via replication fork reversal (RFR). RuvA specifically binds to HJ cruciform DNA, conferring on it an open structure. The RuvB hexamer acts as an ATP-dependent pump, pulling dsDNA into and through the RuvAB complex. HJ branch migration allows RuvC to scan DNA until it finds its consensus sequence, where it cleaves and resolves the cruciform DNA. In Haemophilus ducreyi (strain 35000HP / ATCC 700724), this protein is Holliday junction branch migration complex subunit RuvA.